Here is a 219-residue protein sequence, read N- to C-terminus: Glutathione S-transferase F13 (219 aa).

The region spanning 2-82 (AMKLYGDEMS…YIAEKHRDKG (81 aa)) is the GST N-terminal domain. Glutathione contacts are provided by residues 11–12 (SA), 40–41 (HK), 53–54 (KV), and 66–67 (ES). Residues 90 to 217 (DPKEAAIVKL…VSPGLTVAPT (128 aa)) enclose the GST C-terminal domain.

Belongs to the GST superfamily. Phi family.

It is found in the cytoplasm. The protein localises to the cytosol. The enzyme catalyses RX + glutathione = an S-substituted glutathione + a halide anion + H(+). Its function is as follows. May be involved in the conjugation of reduced glutathione to a wide number of exogenous and endogenous hydrophobic electrophiles and have a detoxification role against certain herbicides. This Arabidopsis thaliana (Mouse-ear cress) protein is Glutathione S-transferase F13 (GSTF13).